Here is a 288-residue protein sequence, read N- to C-terminus: G1/S-specific cyclin-D2 (288 aa).

The region spanning 26 to 151 is the Cyclin N-terminal domain; the sequence is LQNLLTIEER…VLGKLKWNLA (126 aa). Positions 264-288 are disordered; sequence QHNGSKSVEDPDQATTPTDVRDVDL. At serine 270 the chain carries Phosphoserine. Threonine 279 is modified (phosphothreonine).

This sequence belongs to the cyclin family. Cyclin D subfamily. As to quaternary structure, interacts with either CDK4 or CDK6 protein kinase to form a serine/threonine kinase holoenzyme complex. The cyclin subunit imparts substrate specificity to the complex. In terms of processing, phosphorylation at Thr-279 by MAP kinases is required for ubiquitination and degradation by the DCX(AMBRA1) complex. Post-translationally, ubiquitinated by the DCX(AMBRA1) complex during the transition from G1 to S cell phase, leading to its degradation: ubiquitination is dependent on Thr-279 phosphorylation. The DCX(AMBRA1) complex represents the major regulator of CCND2 stability during the G1/S transition. Polyubiquitinated by the SCF(FBXL2) complex, leading to proteasomal degradation.

The protein resides in the nucleus. The protein localises to the cytoplasm. Its subcellular location is the nucleus membrane. Functionally, regulatory component of the cyclin D2-CDK4 (DC) complex that phosphorylates and inhibits members of the retinoblastoma (RB) protein family including RB1 and regulates the cell-cycle during G(1)/S transition. Phosphorylation of RB1 allows dissociation of the transcription factor E2F from the RB/E2F complex and the subsequent transcription of E2F target genes which are responsible for the progression through the G(1) phase. Hypophosphorylates RB1 in early G(1) phase. Cyclin D-CDK4 complexes are major integrators of various mitogenenic and antimitogenic signals. The protein is G1/S-specific cyclin-D2 (Ccnd2) of Rattus norvegicus (Rat).